Reading from the N-terminus, the 272-residue chain is Rhamnulose-1-phosphate aldolase (272 aa).

Glutamate 117 is an active-site residue. 3 residues coordinate Zn(2+): histidine 141, histidine 143, and histidine 212.

Belongs to the aldolase class II family. RhaD subfamily. Requires Zn(2+) as cofactor.

It localises to the cytoplasm. The catalysed reaction is L-rhamnulose 1-phosphate = (S)-lactaldehyde + dihydroxyacetone phosphate. Its pathway is carbohydrate degradation; L-rhamnose degradation; glycerone phosphate from L-rhamnose: step 3/3. Catalyzes the reversible cleavage of L-rhamnulose-1-phosphate to dihydroxyacetone phosphate (DHAP) and L-lactaldehyde. The sequence is that of Rhamnulose-1-phosphate aldolase from Mannheimia succiniciproducens (strain KCTC 0769BP / MBEL55E).